The sequence spans 359 residues: Putative plant UBX domain-containing protein 15 (359 aa).

Residues 277-357 (DRSVVCSISV…GIANSIISVT (81 aa)) form the UBX domain.

The chain is Putative plant UBX domain-containing protein 15 from Arabidopsis thaliana (Mouse-ear cress).